The chain runs to 174 residues: Membrane protein NfeD2 (174 aa).

3 helical membrane passes run 16-36, 47-67, and 72-92; these read LIIA…FSGL, LVLS…LVLP, and LIAL…HIFV.

Belongs to the NfeD family.

It is found in the cell membrane. The protein localises to the membrane raft. In terms of biological role, plays a role in assembly of FloT membrane rafts, probably recruited to rafts by FloT. The protein is Membrane protein NfeD2 of Bacillus subtilis (strain 168).